Reading from the N-terminus, the 295-residue chain is Pantothenate synthetase (295 aa).

29-36 (MGALHSGH) provides a ligand contact to ATP. His36 (proton donor) is an active-site residue. Gln60 is a binding site for (R)-pantoate. Position 60 (Gln60) interacts with beta-alanine. 158–161 (GQKD) lines the ATP pocket. Gln164 provides a ligand contact to (R)-pantoate. ATP contacts are provided by residues Val187 and 195–198 (LSSR).

Belongs to the pantothenate synthetase family. Homodimer.

The protein localises to the cytoplasm. It carries out the reaction (R)-pantoate + beta-alanine + ATP = (R)-pantothenate + AMP + diphosphate + H(+). It functions in the pathway cofactor biosynthesis; (R)-pantothenate biosynthesis; (R)-pantothenate from (R)-pantoate and beta-alanine: step 1/1. Catalyzes the condensation of pantoate with beta-alanine in an ATP-dependent reaction via a pantoyl-adenylate intermediate. The chain is Pantothenate synthetase from Paenarthrobacter aurescens (strain TC1).